The chain runs to 429 residues: 3-phosphoshikimate 1-carboxyvinyltransferase (429 aa).

3 residues coordinate 3-phosphoshikimate: lysine 22, serine 23, and arginine 27. Lysine 22 serves as a coordination point for phosphoenolpyruvate. Positions 94 and 122 each coordinate phosphoenolpyruvate. Serine 167, glutamine 169, aspartate 315, and lysine 342 together coordinate 3-phosphoshikimate. Phosphoenolpyruvate is bound at residue glutamine 169. Aspartate 315 acts as the Proton acceptor in catalysis. Phosphoenolpyruvate is bound by residues arginine 346 and arginine 388.

The protein belongs to the EPSP synthase family. In terms of assembly, monomer.

It localises to the cytoplasm. It catalyses the reaction 3-phosphoshikimate + phosphoenolpyruvate = 5-O-(1-carboxyvinyl)-3-phosphoshikimate + phosphate. It participates in metabolic intermediate biosynthesis; chorismate biosynthesis; chorismate from D-erythrose 4-phosphate and phosphoenolpyruvate: step 6/7. Functionally, catalyzes the transfer of the enolpyruvyl moiety of phosphoenolpyruvate (PEP) to the 5-hydroxyl of shikimate-3-phosphate (S3P) to produce enolpyruvyl shikimate-3-phosphate and inorganic phosphate. This is 3-phosphoshikimate 1-carboxyvinyltransferase from Geobacter sulfurreducens (strain ATCC 51573 / DSM 12127 / PCA).